We begin with the raw amino-acid sequence, 766 residues long: Tetratricopeptide repeat protein 14 (766 aa).

Residues leucine 35–glutamate 55 are disordered. The 83-residue stretch at glycine 125–tyrosine 207 folds into the S1 motif domain. TPR repeat units lie at residues serine 209–serine 242, alanine 306–asparagine 339, glutamate 341–histidine 373, and cysteine 381–phenylalanine 414. The segment at glutamate 463 to proline 743 is disordered. Residues serine 475 to serine 496 show a composition bias toward low complexity. A compositionally biased stretch (basic residues) spans serine 497 to arginine 506. The span at proline 539–lysine 550 shows a compositional bias: polar residues. Positions glutamine 551 to arginine 562 are enriched in basic and acidic residues. The segment covering phenylalanine 594–serine 605 has biased composition (polar residues). Basic and acidic residues-rich tracts occupy residues lysine 606–histidine 616 and asparagine 629–glutamate 657. Over residues valine 661–serine 673 the composition is skewed to polar residues. Phosphoserine is present on serine 666. Positions arginine 707–valine 738 are enriched in basic and acidic residues.

It belongs to the TTC14 family.

This chain is Tetratricopeptide repeat protein 14, found in Mus musculus (Mouse).